A 209-amino-acid polypeptide reads, in one-letter code: 3-demethoxyubiquinol 3-hydroxylase (209 aa).

Residues glutamate 58, glutamate 88, histidine 91, glutamate 140, glutamate 172, and histidine 175 each coordinate Fe cation.

Belongs to the COQ7 family. Fe cation serves as cofactor.

Its subcellular location is the cell membrane. It catalyses the reaction a 5-methoxy-2-methyl-3-(all-trans-polyprenyl)benzene-1,4-diol + AH2 + O2 = a 3-demethylubiquinol + A + H2O. Its pathway is cofactor biosynthesis; ubiquinone biosynthesis. Catalyzes the hydroxylation of 2-nonaprenyl-3-methyl-6-methoxy-1,4-benzoquinol during ubiquinone biosynthesis. The protein is 3-demethoxyubiquinol 3-hydroxylase of Polynucleobacter necessarius subsp. necessarius (strain STIR1).